A 435-amino-acid chain; its full sequence is Enolase (435 aa).

Gln163 provides a ligand contact to (2R)-2-phosphoglycerate. The Proton donor role is filled by Glu205. Positions 243, 292, and 319 each coordinate Mg(2+). Lys344, Arg373, Ser374, and Lys395 together coordinate (2R)-2-phosphoglycerate. The active-site Proton acceptor is the Lys344.

Belongs to the enolase family. Requires Mg(2+) as cofactor.

It localises to the cytoplasm. The protein resides in the secreted. It is found in the cell surface. It carries out the reaction (2R)-2-phosphoglycerate = phosphoenolpyruvate + H2O. Its pathway is carbohydrate degradation; glycolysis; pyruvate from D-glyceraldehyde 3-phosphate: step 4/5. Functionally, catalyzes the reversible conversion of 2-phosphoglycerate (2-PG) into phosphoenolpyruvate (PEP). It is essential for the degradation of carbohydrates via glycolysis. The sequence is that of Enolase from Streptococcus uberis (strain ATCC BAA-854 / 0140J).